We begin with the raw amino-acid sequence, 671 residues long: Major S-layer protein (671 aa).

The N-terminal stretch at 1 to 24 is a signal peptide; it reads MKRFAALSLAALMLLTVFASAASA. 4 N-linked (GlcNAc...) asparagine glycosylation sites follow: asparagine 36, asparagine 70, asparagine 116, and asparagine 350. The disordered stretch occupies residues 594 to 650; that stretch reads GEEVSGEEETPEETPTGEVTETEGEEETPTEVTETPTEGEPAPEETETTESEGTTPG. A compositionally biased stretch (acidic residues) spans 613–622; that stretch reads TETEGEEETP. Over residues 623–633 the composition is skewed to low complexity; that stretch reads TEVTETPTEGE. Acidic residues predominate over residues 634-643; it reads PAPEETETTE. Residues 647–667 traverse the membrane as a helical segment; sequence TTPGFGFMFGLVGLLAVVYLV.

It belongs to the Methanosarcinales S-layer protein family. In terms of processing, glycosylated.

Its subcellular location is the secreted. It is found in the cell wall. It localises to the S-layer. The protein resides in the cell membrane. Its function is as follows. S-layer protein. The S-layer is a paracrystalline mono-layered assembly of proteins which coat the surface of the cell. This Methanosarcina acetivorans (strain ATCC 35395 / DSM 2834 / JCM 12185 / C2A) protein is Major S-layer protein.